Consider the following 503-residue polypeptide: Drimenol monooxygenase (503 aa).

A helical transmembrane segment spans residues 7-23; that stretch reads MICIVVSGLLLYSSRTS. Residue Ser-471 coordinates heme.

It belongs to the cytochrome P450 family. Heme is required as a cofactor.

Its subcellular location is the membrane. The catalysed reaction is (5S,9S,10S)-drim-7-en-11-ol + reduced [NADPH--hemoprotein reductase] + O2 = (5S,10S)-(9R)-7-drimene-11,12-diol + oxidized [NADPH--hemoprotein reductase] + H2O + H(+). Catalyzes the conversion of drimenol to drimendiol, a precursor of the sesquiterpenoid polygodial. Polygodial has been shown to be an antifeedant for a number of herbivorous insects. This chain is Drimenol monooxygenase, found in Persicaria hydropiper (Marshpepper knotweed).